The chain runs to 915 residues: Coronin-7 (915 aa).

WD repeat units follow at residues 75–115 (CHSD…QALP), 124–163 (PEDAQVEVLQFHPTADGVLLSAAGRAVKVWDATKQQPLTE), 166–205 (THGDLVQGAAWSRDGALLGTTCKDKQLRIFDPRAKPEAAQ), and 209–253 (AHEN…AALT). Positions 396–456 (TSCLAPPAEL…TSPSQRSLQS (61 aa)) are disordered. 2 stretches are compositionally biased toward low complexity: residues 399-413 (LAPPAELTPATAQPA) and 420-450 (SSTPSSLTSPSTPSSLGPSLTSTSGIGTSPS). Phosphoserine is present on residues Ser453 and Ser456. A Glycyl lysine isopeptide (Lys-Gly) (interchain with G-Cter in ubiquitin) cross-link involves residue Lys463. WD repeat units lie at residues 533-573 (QNGV…LQEV), 583-623 (GHTE…EQLR), 626-665 (GHRDQIFGLAWSPDGQQLATVCKDGRLRIYEPRGSPEPLQ), and 719-759 (DVAP…PFFL). The segment at 850–915 (PPGMTPVSQA…FEGVDEDEWD (66 aa)) is disordered. A compositionally biased stretch (low complexity) spans 859–869 (APREAPARRAP). Residues 874–886 (LEEKSDQQKKEEL) show a composition bias toward basic and acidic residues. Position 905 is a phosphoserine (Ser905).

Belongs to the WD repeat coronin family. In terms of assembly, interacts with clathrin adapter AP1 complex. This interaction takes place at Golgi membranes and not AP1-positive endosomal membranes. Interacts (when ubiquitinated at Lys-463) with EPS15. In terms of processing, the membrane-associated form is phosphorylated on tyrosine residues. Post-translationally, ubiquitinated via 'Lys-33'-linked ubiquitin chains by the BCR(KLHL20) E3 ubiquitin ligase complex: 'Lys-33'-linked ubiquitination promotes interaction with EPS15 and facilitates actin polymerization at the trans-Golgi network, thereby facilitating post-Golgi trafficking. Deubiquitinated by ZRANB1/TRABID.

It is found in the golgi apparatus membrane. The protein resides in the golgi apparatus. The protein localises to the trans-Golgi network. It localises to the cytoplasmic vesicle. Its subcellular location is the cytoplasm. It is found in the cytosol. In terms of biological role, F-actin regulator involved in anterograde Golgi to endosome transport: upon ubiquitination via 'Lys-33'-linked ubiquitin chains by the BCR(KLHL20) E3 ubiquitin ligase complex, interacts with EPS15 and localizes to the trans-Golgi network, where it promotes actin polymerization, thereby facilitating post-Golgi trafficking. May play a role in the maintenance of the Golgi apparatus morphology. This is Coronin-7 (CORO7) from Bos taurus (Bovine).